We begin with the raw amino-acid sequence, 404 residues long: MKSKLKRQLPAMVIVCLLMICVTGCWSSREIEDLGLTFAIAIDKGKETNTEKELKEEGGSYPKKDNITLTYQFVNEKAAGAGTSGGGGSGQGAQKAYINISETGDSLQQIGSEVALRRDREVFSPHLKVVVMSEDVLHTFPIDEMLDQFFRDNEIRLSCLVLSAKGEARDALQLKENGEIPAFRLIGLGENEHKVSRILPPMTLAKLIGKLHSGSSFLLQNVVAANGAVKYSGAAVINGKSKKMIGTLNEYETEGITWIRGEGKGGVVKSHDKKSQQTLAYDINKIKSRIQPIVKGKDISFHVDIESEGDLVENWNTKEALDTQFIDRLETTIENEVKKIVGQVLKKIQHDYKADVAGFDESFRLTYPHLWKRVKNNWDDTFSKADITYSVNVTITHFGTVKTQ.

Positions 1–24 are cleaved as a signal peptide; it reads MKSKLKRQLPAMVIVCLLMICVTG. A lipid anchor (N-palmitoyl cysteine) is attached at C25. A lipid anchor (S-diacylglycerol cysteine) is attached at C25.

Belongs to the GerABKC lipoprotein family.

The protein resides in the cell membrane. In terms of biological role, may be involved in spore germination. The polypeptide is Spore germination protein YndF (yndF) (Bacillus subtilis (strain 168)).